Consider the following 553-residue polypeptide: Phosphoglucomutase (553 aa).

The segment at 1-24 is disordered; sequence MQATVKRYPTTPISGQTMGTSGLR. Residues 11-20 show a composition bias toward polar residues; the sequence is TPISGQTMGT. Residues Thr-20, Arg-24, 117–118, and Lys-131 contribute to the substrate site; that span reads SH. Residue Ser-117 is the Phosphoserine intermediate of the active site. Ser-117 lines the Mg(2+) pocket. Positions 289, 291, and 293 each coordinate Mg(2+). Residues 293-294, Thr-352, 371-373, Lys-384, and Arg-509 each bind substrate; these read DR and EES.

The protein belongs to the phosphohexose mutase family. Requires Mg(2+) as cofactor.

It is found in the cytoplasm. It carries out the reaction alpha-D-glucose 1-phosphate = alpha-D-glucose 6-phosphate. This enzyme participates in both the breakdown and synthesis of glucose. The chain is Phosphoglucomutase (pgm) from Entamoeba dispar.